Reading from the N-terminus, the 788-residue chain is Protein translocase subunit SecA 2 (788 aa).

ATP is bound by residues Gln86, 104-108, and Asp493; that span reads GEGKT.

This sequence belongs to the SecA family. In terms of assembly, monomer and homodimer. Part of the essential Sec protein translocation apparatus which comprises SecA, SecYEG and auxiliary proteins SecDF. Other proteins may also be involved.

It is found in the cell membrane. The protein localises to the cytoplasm. It carries out the reaction ATP + H2O + cellular proteinSide 1 = ADP + phosphate + cellular proteinSide 2.. Functionally, part of the Sec protein translocase complex. Interacts with the SecYEG preprotein conducting channel. Has a central role in coupling the hydrolysis of ATP to the transfer of proteins into and across the cell membrane, serving as an ATP-driven molecular motor driving the stepwise translocation of polypeptide chains across the membrane. The protein is Protein translocase subunit SecA 2 of Geobacillus thermodenitrificans (strain NG80-2).